Here is a 380-residue protein sequence, read N- to C-terminus: 1-deoxy-D-xylulose 5-phosphate reductoisomerase (380 aa).

8 residues coordinate NADPH: Ser10, Gly11, Ser12, Ile13, Gly36, Lys37, Asn38, and Asn120. Residue Lys121 coordinates 1-deoxy-D-xylulose 5-phosphate. Glu122 contributes to the NADPH binding site. Asp146 serves as a coordination point for Mn(2+). Ser147, Glu148, Ser172, and His195 together coordinate 1-deoxy-D-xylulose 5-phosphate. Residue Glu148 participates in Mn(2+) binding. Gly201 is a binding site for NADPH. Positions 208, 213, 214, and 217 each coordinate 1-deoxy-D-xylulose 5-phosphate. A Mn(2+)-binding site is contributed by Glu217.

Belongs to the DXR family. The cofactor is Mg(2+). Mn(2+) serves as cofactor.

The enzyme catalyses 2-C-methyl-D-erythritol 4-phosphate + NADP(+) = 1-deoxy-D-xylulose 5-phosphate + NADPH + H(+). It functions in the pathway isoprenoid biosynthesis; isopentenyl diphosphate biosynthesis via DXP pathway; isopentenyl diphosphate from 1-deoxy-D-xylulose 5-phosphate: step 1/6. In terms of biological role, catalyzes the NADPH-dependent rearrangement and reduction of 1-deoxy-D-xylulose-5-phosphate (DXP) to 2-C-methyl-D-erythritol 4-phosphate (MEP). The protein is 1-deoxy-D-xylulose 5-phosphate reductoisomerase of Bacillus cereus (strain Q1).